Here is a 720-residue protein sequence, read N- to C-terminus: Putative glutamine--fructose-6-phosphate aminotransferase [isomerizing] (720 aa).

Residue C2 is the Nucleophile; for GATase activity of the active site. Residues 2–321 (CGIFGYCNFL…DNDTAHIYDG (320 aa)) enclose the Glutamine amidotransferase type-2 domain. A compositionally biased stretch (polar residues) spans 266-280 (STTSTFNHGSSTETP). Positions 266–285 (STTSTFNHGSSTETPAENGL) are disordered. 2 consecutive SIS domains span residues 393–532 (WLTE…DLVS) and 565–710 (CDKK…VDLP).

The catalysed reaction is D-fructose 6-phosphate + L-glutamine = D-glucosamine 6-phosphate + L-glutamate. The protein operates within nucleotide-sugar biosynthesis; UDP-N-acetyl-alpha-D-glucosamine biosynthesis; alpha-D-glucosamine 6-phosphate from D-fructose 6-phosphate: step 1/1. In terms of biological role, involved in amino sugar synthesis (formation of chitin, supplies the amino sugars of asparagine-linked oligosaccharides of glycoproteins). In Saccharomyces cerevisiae (strain JAY291) (Baker's yeast), this protein is Putative glutamine--fructose-6-phosphate aminotransferase [isomerizing].